A 217-amino-acid polypeptide reads, in one-letter code: Ras-related protein Rab-19 (217 aa).

GTP-binding residues include Ser-26, Val-28, Gly-29, Lys-30, Thr-31, Cys-32, Tyr-42, Ser-43, Glu-44, Ser-45, and Thr-49. Mg(2+) is bound at residue Thr-31. Residues 39–54 (SGVYSESQQNTIGVDF) carry the Switch 1 motif. Residues Thr-49 and Asp-72 each coordinate Mg(2+). The Switch 2 signature appears at 74-89 (AGQERFRTITQSYYRS). The GTP site is built by Gly-75, Asn-130, Lys-131, Asp-133, Ser-161, Ala-162, and Lys-163. S-geranylgeranyl cysteine attachment occurs at residues Cys-215 and Cys-217. Cys-217 is subject to Cysteine methyl ester.

The protein belongs to the small GTPase superfamily. Rab family. Requires Mg(2+) as cofactor.

It is found in the cell membrane. The enzyme catalyses GTP + H2O = GDP + phosphate + H(+). With respect to regulation, regulated by guanine nucleotide exchange factors (GEFs) which promote the exchange of bound GDP for free GTP. Regulated by GTPase activating proteins (GAPs) which increase the GTP hydrolysis activity. Inhibited by GDP dissociation inhibitors (GDIs). In terms of biological role, the small GTPases Rab are key regulators of intracellular membrane trafficking, from the formation of transport vesicles to their fusion with membranes. Rabs cycle between an inactive GDP-bound form and an active GTP-bound form that is able to recruit to membranes different set of downstream effectors directly responsible for vesicle formation, movement, tethering and fusion. This chain is Ras-related protein Rab-19, found in Rattus norvegicus (Rat).